A 367-amino-acid chain; its full sequence is Protein SUPPRESSOR OF FRI 4 (367 aa).

A BED-type zinc finger spans residues 7–66 (RATEKVWCYYCDREFDDEKILVQHQKAKHFKCHVCHKKLSTASGMVIHVLQVHKENVTKV). Residues C38, C41, H54, and H59 each contribute to the Zn(2+) site. The interval 246–309 (PFSAPLPVGG…PPVIANKAPS (64 aa)) is disordered. The span at 273–295 (PNNSIPGGTNAHSYASGPNTSGP) shows a compositional bias: polar residues.

Homodimer. Component of the transcription activator complex FRI-C composed of FRI, FRL1, SUF4, FLX and FES1. Interacts with LD, ASHH2, FRL1, (via C-terminus) with FRI (via C-terminus), and with SWC6, a component of the SWR1 chromatin-remodeling complex. Binds to MED18 to regulate flowering time; recruits MED18 to FLC promoter. As to expression, expressed in root, shoot apex, leaves, stem and flowers. Expressed in expanding leaves, in the vasculature of fully expanded leaves, in the inflorescence, throughout young floral primordia, in the carpels of older flowers and in fertilized ovules.

It localises to the nucleus. Sequence-specific DNA binding factor that recognizes the 5'-CCAAATTTTAAGTTT-3' sequence. Recruits the FRI-C complex to the FLC promoter. Required for FRI-mediated FLC activation, but has no effect on the expression of MAF1, MAF2, MAF3, MAF5, UFC and CO. Dispensable for the reactivation of FLC in early embryogenesis, but required to maintain high levels of FLC expression in later embryonic and vegetative development. The polypeptide is Protein SUPPRESSOR OF FRI 4 (Arabidopsis thaliana (Mouse-ear cress)).